Consider the following 201-residue polypeptide: 3-isopropylmalate dehydratase small subunit (201 aa).

It belongs to the LeuD family. LeuD type 1 subfamily. In terms of assembly, heterodimer of LeuC and LeuD.

It catalyses the reaction (2R,3S)-3-isopropylmalate = (2S)-2-isopropylmalate. The protein operates within amino-acid biosynthesis; L-leucine biosynthesis; L-leucine from 3-methyl-2-oxobutanoate: step 2/4. Catalyzes the isomerization between 2-isopropylmalate and 3-isopropylmalate, via the formation of 2-isopropylmaleate. The chain is 3-isopropylmalate dehydratase small subunit from Escherichia coli O45:K1 (strain S88 / ExPEC).